The sequence spans 885 residues: DNA mismatch repair protein MutS (885 aa).

Position 626-633 (626-633 (GPNMGGKS)) interacts with ATP.

Belongs to the DNA mismatch repair MutS family.

In terms of biological role, this protein is involved in the repair of mismatches in DNA. It is possible that it carries out the mismatch recognition step. This protein has a weak ATPase activity. The sequence is that of DNA mismatch repair protein MutS from Burkholderia cenocepacia (strain ATCC BAA-245 / DSM 16553 / LMG 16656 / NCTC 13227 / J2315 / CF5610) (Burkholderia cepacia (strain J2315)).